Here is a 154-residue protein sequence, read N- to C-terminus: 6,7-dimethyl-8-ribityllumazine synthase (154 aa).

5-amino-6-(D-ribitylamino)uracil contacts are provided by residues F23, 57–59 (AFE), and 81–83 (AVI). 86–87 (ST) is a (2S)-2-hydroxy-3-oxobutyl phosphate binding site. The active-site Proton donor is H89. F114 serves as a coordination point for 5-amino-6-(D-ribitylamino)uracil. Residue R128 participates in (2S)-2-hydroxy-3-oxobutyl phosphate binding.

Belongs to the DMRL synthase family.

The catalysed reaction is (2S)-2-hydroxy-3-oxobutyl phosphate + 5-amino-6-(D-ribitylamino)uracil = 6,7-dimethyl-8-(1-D-ribityl)lumazine + phosphate + 2 H2O + H(+). The protein operates within cofactor biosynthesis; riboflavin biosynthesis; riboflavin from 2-hydroxy-3-oxobutyl phosphate and 5-amino-6-(D-ribitylamino)uracil: step 1/2. Functionally, catalyzes the formation of 6,7-dimethyl-8-ribityllumazine by condensation of 5-amino-6-(D-ribitylamino)uracil with 3,4-dihydroxy-2-butanone 4-phosphate. This is the penultimate step in the biosynthesis of riboflavin. This is 6,7-dimethyl-8-ribityllumazine synthase from Campylobacter jejuni subsp. doylei (strain ATCC BAA-1458 / RM4099 / 269.97).